The following is a 77-amino-acid chain: Probable Vpr-like protein (77 aa).

A Nuclear export signal motif is present at residues 34–42 (LIRLLQGLL). Positions 44 to 53 (RLRFRKPKSK) match the Nuclear localization signal motif.

It localises to the virion. The protein localises to the host nucleus. Its function is as follows. Seems to function as a Vpr-like protein, since it mediates host cell cycle arrest in G2 phase. Cell cycle arrest creates a favorable environment for maximizing viral expression and production. This Felidae (cat family) protein is Probable Vpr-like protein.